The sequence spans 567 residues: Major facilitator superfamily transporter MG061 (567 aa).

The next 12 helical transmembrane spans lie at 15 to 35 (ITLW…WFVI), 78 to 98 (WTIT…VLKF), 104 to 124 (VLIM…GDPL), 193 to 213 (GYAL…TLVV), 230 to 250 (ILSN…FTPF), 264 to 284 (VYIM…FLWF), 321 to 341 (LIGV…PAWF), 363 to 383 (TGLA…FVVF), 405 to 425 (IVVL…SAAG), 426 to 446 (FALI…LSSS), 462 to 482 (LPIL…LFDI), and 503 to 523 (PGVI…NLIV).

Belongs to the major facilitator superfamily.

It localises to the cell membrane. This Mycoplasma genitalium (strain ATCC 33530 / DSM 19775 / NCTC 10195 / G37) (Mycoplasmoides genitalium) protein is Major facilitator superfamily transporter MG061.